The primary structure comprises 149 residues: Secreted RxLR effector protein 47 (149 aa).

A signal peptide spans 1-22 (MICLLPLIAVMLFVFATHTVLA). A RxLR-dEER motif is present at residues 57 to 79 (RFLRQETTFEEKPSVNDVHAEER).

It belongs to the RxLR effector family.

Its subcellular location is the secreted. The protein resides in the host membrane. In terms of biological role, secreted effector that completely suppresses the host cell death induced by cell death-inducing proteins. This is Secreted RxLR effector protein 47 from Plasmopara viticola (Downy mildew of grapevine).